The chain runs to 220 residues: Small ribosomal subunit protein uS3c (220 aa).

In terms of domain architecture, KH type-2 spans 48–119 (VQKHTNNPFH…KLCLILIKID (72 aa)).

The protein belongs to the universal ribosomal protein uS3 family. In terms of assembly, part of the 30S ribosomal subunit.

It is found in the plastid. The protein resides in the chloroplast. The protein is Small ribosomal subunit protein uS3c (rps3) of Psilotum nudum (Whisk fern).